Consider the following 91-residue polypeptide: Acylphosphatase (91 aa).

Positions 3–91 constitute an Acylphosphatase-like domain; that stretch reads HIKVNVKGQV…TELTKFEVKY (89 aa). Active-site residues include R18 and N36.

It belongs to the acylphosphatase family.

It catalyses the reaction an acyl phosphate + H2O = a carboxylate + phosphate + H(+). The protein is Acylphosphatase (acyP) of Oceanobacillus iheyensis (strain DSM 14371 / CIP 107618 / JCM 11309 / KCTC 3954 / HTE831).